A 938-amino-acid chain; its full sequence is Isoleucine--tRNA ligase (938 aa).

Residues 58–68 (PYANGNIHIGH) carry the 'HIGH' region motif. Position 561 (glutamate 561) interacts with L-isoleucyl-5'-AMP. The 'KMSKS' region signature appears at 602–606 (KMSKS). ATP is bound at residue lysine 605. Zn(2+) is bound by residues cysteine 901, cysteine 904, cysteine 921, and cysteine 924.

This sequence belongs to the class-I aminoacyl-tRNA synthetase family. IleS type 1 subfamily. Monomer. Zn(2+) serves as cofactor.

The protein localises to the cytoplasm. The enzyme catalyses tRNA(Ile) + L-isoleucine + ATP = L-isoleucyl-tRNA(Ile) + AMP + diphosphate. Its function is as follows. Catalyzes the attachment of isoleucine to tRNA(Ile). As IleRS can inadvertently accommodate and process structurally similar amino acids such as valine, to avoid such errors it has two additional distinct tRNA(Ile)-dependent editing activities. One activity is designated as 'pretransfer' editing and involves the hydrolysis of activated Val-AMP. The other activity is designated 'posttransfer' editing and involves deacylation of mischarged Val-tRNA(Ile). This is Isoleucine--tRNA ligase from Yersinia pseudotuberculosis serotype O:1b (strain IP 31758).